The primary structure comprises 228 residues: AA9 family lytic polysaccharide monooxygenase A (228 aa).

Residues His1 and His86 each contribute to the Cu(2+) site. His1 carries the post-translational modification Methylhistidine. 2 disulfides stabilise this stretch: Cys56–Cys178 and Cys97–Cys101. The N-linked (GlcNAc...) asparagine glycan is linked to Asn138. O2 contacts are provided by His164 and Gln173. Cu(2+) is bound at residue Tyr175.

This sequence belongs to the polysaccharide monooxygenase AA9 family. Cu(2+) serves as cofactor. Post-translationally, the catalytically essential N-terminal histidine His-22 is post-translationally modified by methylation to prevent protonation of the histidine side chain, and protect the critical active site of the enzyme from oxidative damage.

The protein localises to the secreted. The catalysed reaction is [(1-&gt;4)-beta-D-glucosyl]n+m + reduced acceptor + O2 = 4-dehydro-beta-D-glucosyl-[(1-&gt;4)-beta-D-glucosyl]n-1 + [(1-&gt;4)-beta-D-glucosyl]m + acceptor + H2O.. Its activity is regulated as follows. Small amounts of H(2)O(2) boost LPMO activity, while higher amounts lead to inactivation of the enzyme. Lytic polysaccharide monooxygenase (LPMO) that depolymerizes crystalline and amorphous polysaccharides via the oxidation of scissile alpha- or beta-(1-4)-glycosidic bonds, yielding C1 and C4 oxidation product. Catalysis by LPMOs requires the reduction of the active-site copper from Cu(II) to Cu(I) by a reducing agent and H(2)O(2) or O(2) as a cosubstrate. Is able to cleave cellulose and xylan to produce C1- and C4-oxidized products. The protein is AA9 family lytic polysaccharide monooxygenase A of Thermoascus aurantiacus.